Here is a 534-residue protein sequence, read N- to C-terminus: Prolyl 4-hydroxylase subunit alpha-2 (534 aa).

The first 21 residues, 1-21, serve as a signal peptide directing secretion; that stretch reads MKPWLCLVFFTSAFLIWHAEA. A glycan (N-linked (GlcNAc...) asparagine) is linked at Asn-115. Residues 207-240 form a TPR repeat; the sequence is VEILDYLSYAVFQFGDLHRAMELTRRLISLDSTH. The N-linked (GlcNAc...) asparagine glycan is linked to Asn-263. The 107-residue stretch at 413 to 519 folds into the Fe2OG dioxygenase domain; the sequence is TAELLQVANY…KWVSNKWFHE (107 aa). Fe cation is bound by residues His-431, Asp-433, and His-500. Lys-510 serves as a coordination point for 2-oxoglutarate.

The protein belongs to the P4HA family. As to quaternary structure, heterotetramer of two alpha-2 chains and two beta chains (the beta chain is the multi-functional PDI). The cofactor is Fe(2+). Requires L-ascorbate as cofactor.

It is found in the endoplasmic reticulum lumen. It catalyses the reaction L-prolyl-[collagen] + 2-oxoglutarate + O2 = trans-4-hydroxy-L-prolyl-[collagen] + succinate + CO2. Functionally, catalyzes the post-translational formation of 4-hydroxyproline in -Xaa-Pro-Gly- sequences in collagens and other proteins. The chain is Prolyl 4-hydroxylase subunit alpha-2 (P4HA2) from Gallus gallus (Chicken).